Consider the following 487-residue polypeptide: Serine/threonine-protein kinase 4 (487 aa).

Methionine 1 bears the N-acetylmethionine mark. A Phosphothreonine modification is found at threonine 3. The region spanning 30–281 (FDVLEKLGEG…ATQLLQHPFV (252 aa)) is the Protein kinase domain. Residues 36–44 (LGEGSYGSV) and lysine 59 each bind ATP. Aspartate 149 acts as the Proton acceptor in catalysis. Position 183 is a phosphothreonine; by autocatalysis (threonine 183). At serine 265 the chain carries Phosphoserine. Residues 290-310 (LRDLINEAMDVKLKRQESQQR) adopt a coiled-coil conformation. The segment covering 303-312 (KRQESQQREV) has biased composition (basic and acidic residues). The interval 303 to 332 (KRQESQQREVDQDDEENSEEDEMDSGTMVR) is disordered. Positions 313-326 (DQDDEENSEEDEMD) are enriched in acidic residues. Serine 320 carries the phosphoserine modification. Phosphothreonine occurs at positions 340 and 367. Phosphothreonine; by PKB/AKT1 is present on threonine 387. Phosphoserine occurs at positions 410 and 414. Tyrosine 433 is modified (phosphotyrosine). One can recognise an SARAH domain in the interval 433–480 (YEFLKSWTVEDLQKRLLALDPMMEQEIEEIRQKYQSKRQPILDAIEAK).

Belongs to the protein kinase superfamily. STE Ser/Thr protein kinase family. STE20 subfamily. As to quaternary structure, homodimer; mediated via the coiled-coil region. Interacts with NORE1, which inhibits autoactivation. Interacts with and stabilizes SAV1. Interacts with RASSF1. Interacts with FOXO3. Interacts with RASSF2 (via SARAH domain). Interacts with AR, PKB/AKT1, TNNI3 and SIRT1. Interacts with DLG5 (via PDZ domain 3). Interacts with MARK3 and SCRIB in the presence of DLG5. Requires Mg(2+) as cofactor. Post-translationally, autophosphorylated on serine and threonine residues. Phosphorylation at Thr-387 by PKB/AKT1, leads to inhibition of its: kinase activity, nuclear translocation and autophosphorylation at Thr-183. It also diminishes its cleavage by caspases and its ability to phosphorylate FOXO3. In terms of processing, proteolytically cleaved by caspase-3 during apoptosis at Asp-326 and Asp-349 resulting in a 37 kDa or a 39 kDa subunit respectively. The 39 kDa subunit is further cleaved into the 37 kDa form. Proteolytic cleavage results in kinase activation and nuclear translocation of the truncated form (MST1/N). It is less likely that cleavage at Asp-349 is a prerequisite for activation as this site is not conserved in the murine ortholog.

It is found in the cytoplasm. The protein resides in the nucleus. It catalyses the reaction L-seryl-[protein] + ATP = O-phospho-L-seryl-[protein] + ADP + H(+). The catalysed reaction is L-threonyl-[protein] + ATP = O-phospho-L-threonyl-[protein] + ADP + H(+). Inhibited by the C-terminal non-catalytic region. Activated by caspase-cleavage. Full activation also requires homodimerization and autophosphorylation of Thr-183. Activated by RASSF1 which acts by preventing its dephosphorylation. In terms of biological role, stress-activated, pro-apoptotic kinase which, following caspase-cleavage, enters the nucleus and induces chromatin condensation followed by internucleosomal DNA fragmentation. Key component of the Hippo signaling pathway which plays a pivotal role in organ size control and tumor suppression by restricting proliferation and promoting apoptosis. The core of this pathway is composed of a kinase cascade wherein STK3/MST2 and STK4/MST1, in complex with its regulatory protein SAV1, phosphorylates and activates LATS1/2 in complex with its regulatory protein MOB1, which in turn phosphorylates and inactivates YAP1 oncoprotein and WWTR1/TAZ. Phosphorylation of YAP1 by LATS2 inhibits its translocation into the nucleus to regulate cellular genes important for cell proliferation, cell death, and cell migration. STK3/MST2 and STK4/MST1 are required to repress proliferation of mature hepatocytes, to prevent activation of facultative adult liver stem cells (oval cells), and to inhibit tumor formation. Phosphorylates 'Ser-14' of histone H2B (H2BS14ph) during apoptosis. Phosphorylates FOXO3 upon oxidative stress, which results in its nuclear translocation and cell death initiation. Phosphorylates MOBKL1A, MOBKL1B and RASSF2. Phosphorylates TNNI3 (cardiac Tn-I) and alters its binding affinity to TNNC1 (cardiac Tn-C) and TNNT2 (cardiac Tn-T). Phosphorylates FOXO1 on 'Ser-212' and regulates its activation and stimulates transcription of PMAIP1 in a FOXO1-dependent manner. Phosphorylates SIRT1 and inhibits SIRT1-mediated p53/TP53 deacetylation, thereby promoting p53/TP53 dependent transcription and apoptosis upon DNA damage. Acts as an inhibitor of PKB/AKT1. Phosphorylates AR on 'Ser-650' and suppresses its activity by intersecting with PKB/AKT1 signaling and antagonizing formation of AR-chromatin complexes. The protein is Serine/threonine-protein kinase 4 (STK4) of Papio anubis (Olive baboon).